The following is a 363-amino-acid chain: LIM and cysteine-rich domains protein 1 (363 aa).

Phosphoserine is present on Ser16. Residues 99 to 206 (MIMTNPIATG…GEVALPGQGG (108 aa)) form the PET domain. Positions 200-233 (ALPGQGGLPKEEGKQQEKPEGAETAAPTANGSLG) are disordered. Over residues 208 to 220 (PKEEGKQQEKPEG) the composition is skewed to basic and acidic residues. LIM zinc-binding domains follow at residues 239–304 (YVCE…SLRP) and 305–363 (RCSG…SKRT).

Interacts with beta-dystroglycan. Interacts with GATA1, GATA4 and GATA6. Highly expressed in both skeletal muscle and cardiac muscle.

It is found in the cytoplasm. Its subcellular location is the nucleus. Transcriptional cofactor that restricts GATA6 function by inhibiting DNA-binding, resulting in repression of GATA6 transcriptional activation of downstream target genes. Represses GATA6-mediated trans activation of lung- and cardiac tissue-specific promoters. Inhibits DNA-binding by GATA4 and GATA1 to the cTNC promoter. Plays a critical role in the development of cardiac hypertrophy via activation of calcineurin/nuclear factor of activated T-cells signaling pathway. The sequence is that of LIM and cysteine-rich domains protein 1 (LMCD1) from Sus scrofa (Pig).